A 436-amino-acid chain; its full sequence is UDP-N-acetylglucosamine 1-carboxyvinyltransferase 1 (436 aa).

Phosphoenolpyruvate is bound at residue 22 to 23 (KN). UDP-N-acetyl-alpha-D-glucosamine is bound at residue arginine 93. The Proton donor role is filled by cysteine 117. A 2-(S-cysteinyl)pyruvic acid O-phosphothioketal modification is found at cysteine 117. UDP-N-acetyl-alpha-D-glucosamine is bound by residues 122-126 (RPIDQ), aspartate 306, and valine 328.

This sequence belongs to the EPSP synthase family. MurA subfamily.

The protein localises to the cytoplasm. The enzyme catalyses phosphoenolpyruvate + UDP-N-acetyl-alpha-D-glucosamine = UDP-N-acetyl-3-O-(1-carboxyvinyl)-alpha-D-glucosamine + phosphate. It participates in cell wall biogenesis; peptidoglycan biosynthesis. Functionally, cell wall formation. Adds enolpyruvyl to UDP-N-acetylglucosamine. This chain is UDP-N-acetylglucosamine 1-carboxyvinyltransferase 1, found in Bacillus licheniformis (strain ATCC 14580 / DSM 13 / JCM 2505 / CCUG 7422 / NBRC 12200 / NCIMB 9375 / NCTC 10341 / NRRL NRS-1264 / Gibson 46).